The following is a 1944-amino-acid chain: Anaphase-promoting complex subunit 1 (1944 aa).

A phosphoserine mark is found at Ser51 and Ser60. Phosphothreonine is present on Thr291. The segment at 312–343 (ESPVASPFQNYSSIHSQSRSTSSPSLHSRSPS) is disordered. Phosphoserine occurs at positions 313, 341, 343, 355, 362, 373, and 377. Over residues 323–343 (SSIHSQSRSTSSPSLHSRSPS) the composition is skewed to low complexity. Positions 370 to 395 (NLSSHSQSPKRHSISHSPSGSFNDSF) are disordered. Polar residues predominate over residues 384–393 (SHSPSGSFND). At Thr537 the chain carries Phosphothreonine. Residues Ser547 and Ser555 each carry the phosphoserine modification. The residue at position 571 (Tyr571) is a Phosphotyrosine. A phosphoserine mark is found at Ser680, Ser686, and Ser688. The interval 991 to 1014 (NLPRGKSVLSSEVSSGTEAEEEDD) is disordered. The span at 998–1007 (VLSSEVSSGT) shows a compositional bias: polar residues. PC repeat units lie at residues 1297–1325 (AAGLALGMVCLGHGSNLIGMSDLNVPEQL), 1366–1404 (GATLALAMIYLKTNNRSIADWLRAPDTMYLLDFVKPEFL), 1467–1501 (GACLSLGFRFAGSENLSAFSCLHKFAKDFMNYLSA), and 1520–1552 (LLSLAMVMAGSGNLKVLQLCRFLHMKTGGEMNY).

It belongs to the APC1 family. As to quaternary structure, the mammalian APC/C is composed at least of 14 distinct subunits ANAPC1, ANAPC2, CDC27/APC3, ANAPC4, ANAPC5, CDC16/APC6, ANAPC7, CDC23/APC8, ANAPC10, ANAPC11, CDC26/APC12, ANAPC13, ANAPC15 and ANAPC16 that assemble into a complex of at least 19 chains with a combined molecular mass of around 1.2 MDa; APC/C interacts with FZR1 and FBXO5. In terms of processing, phosphorylated. Phosphorylation on Ser-355 occurs specifically during mitosis. Abundantly expressed in proliferating fibroblasts, juvenile testis, adult brain and epididymis.

Its pathway is protein modification; protein ubiquitination. Component of the anaphase promoting complex/cyclosome (APC/C), a cell cycle-regulated E3 ubiquitin ligase that controls progression through mitosis and the G1 phase of the cell cycle. The APC/C complex acts by mediating ubiquitination and subsequent degradation of target proteins: it mainly mediates the formation of 'Lys-11'-linked polyubiquitin chains and, to a lower extent, the formation of 'Lys-48'- and 'Lys-63'-linked polyubiquitin chains. The APC/C complex catalyzes assembly of branched 'Lys-11'-/'Lys-48'-linked branched ubiquitin chains on target proteins. In Mus musculus (Mouse), this protein is Anaphase-promoting complex subunit 1 (Anapc1).